A 180-amino-acid chain; its full sequence is ATP synthase subunit b, chloroplastic (180 aa).

The helical transmembrane segment at valine 28–phenylalanine 48 threads the bilayer.

It belongs to the ATPase B chain family. In terms of assembly, F-type ATPases have 2 components, F(1) - the catalytic core - and F(0) - the membrane proton channel. F(1) has five subunits: alpha(3), beta(3), gamma(1), delta(1), epsilon(1). F(0) has four main subunits: a(1), b(1), b'(1) and c(10-14). The alpha and beta chains form an alternating ring which encloses part of the gamma chain. F(1) is attached to F(0) by a central stalk formed by the gamma and epsilon chains, while a peripheral stalk is formed by the delta, b and b' chains.

The protein localises to the plastid. It is found in the chloroplast thylakoid membrane. Functionally, f(1)F(0) ATP synthase produces ATP from ADP in the presence of a proton or sodium gradient. F-type ATPases consist of two structural domains, F(1) containing the extramembraneous catalytic core and F(0) containing the membrane proton channel, linked together by a central stalk and a peripheral stalk. During catalysis, ATP synthesis in the catalytic domain of F(1) is coupled via a rotary mechanism of the central stalk subunits to proton translocation. In terms of biological role, component of the F(0) channel, it forms part of the peripheral stalk, linking F(1) to F(0). The polypeptide is ATP synthase subunit b, chloroplastic (Cuscuta obtusiflora (Peruvian dodder)).